A 120-amino-acid chain; its full sequence is NAD(P)H-quinone oxidoreductase subunit 3, chloroplastic (120 aa).

Transmembrane regions (helical) follow at residues 9-29, 64-84, and 88-108; these read IFWAFLIISSAIPVLAFLISG, MFALVFVVFDVETVFLYPWAM, and VLGVSAFIEALIFVLILILGL.

It belongs to the complex I subunit 3 family. As to quaternary structure, NDH is composed of at least 16 different subunits, 5 of which are encoded in the nucleus.

Its subcellular location is the plastid. It is found in the chloroplast thylakoid membrane. The enzyme catalyses a plastoquinone + NADH + (n+1) H(+)(in) = a plastoquinol + NAD(+) + n H(+)(out). It catalyses the reaction a plastoquinone + NADPH + (n+1) H(+)(in) = a plastoquinol + NADP(+) + n H(+)(out). Functionally, NDH shuttles electrons from NAD(P)H:plastoquinone, via FMN and iron-sulfur (Fe-S) centers, to quinones in the photosynthetic chain and possibly in a chloroplast respiratory chain. The immediate electron acceptor for the enzyme in this species is believed to be plastoquinone. Couples the redox reaction to proton translocation, and thus conserves the redox energy in a proton gradient. This chain is NAD(P)H-quinone oxidoreductase subunit 3, chloroplastic, found in Olimarabidopsis pumila (Dwarf rocket).